Here is a 386-residue protein sequence, read N- to C-terminus: Delta(7)-sterol 5(6)-desaturase ERG3 (386 aa).

Transmembrane regions (helical) follow at residues 120 to 140 (LSLFIITTIFGWLLYFIVAYL), 172 to 192 (IPVMVLLTIPFFLLELNGYSF), and 206 to 226 (AILWQIPKFILFTDCGIYFLH). In terms of domain architecture, Fatty acid hydroxylase spans 214 to 337 (FILFTDCGIY…FTTLWDRLGN (124 aa)). The Histidine box-1 signature appears at 226 to 230 (HRWLH). The Histidine box-2 signature appears at 239 to 243 (HKPHH). Residues 272 to 292 (PLLFPLHKVLYLFLFTFVNFW) form a helical membrane-spanning segment. The short motif at 314–318 (HTVHH) is the Histidine box-3 element.

The protein belongs to the sterol desaturase family. The cofactor is Fe cation.

Its subcellular location is the endoplasmic reticulum membrane. It catalyses the reaction a Delta(7)-sterol + 2 Fe(II)-[cytochrome b5] + O2 + 2 H(+) = a Delta(5),Delta(7)-sterol + 2 Fe(III)-[cytochrome b5] + 2 H2O. Its pathway is steroid metabolism; ergosterol biosynthesis; ergosterol from zymosterol: step 3/5. Functionally, C-5 sterol desaturase; part of the third module of ergosterol biosynthesis pathway that includes the late steps of the pathwa. ERG3 catalyzes the introduction of a C-5 double bond in the B ring to produce 5-dehydroepisterol. The third module or late pathway involves the ergosterol synthesis itself through consecutive reactions that mainly occur in the endoplasmic reticulum (ER) membrane. Firstly, the squalene synthase ERG9 catalyzes the condensation of 2 farnesyl pyrophosphate moieties to form squalene, which is the precursor of all steroids. Squalene synthase is crucial for balancing the incorporation of farnesyl diphosphate (FPP) into sterol and nonsterol isoprene synthesis. Secondly, the squalene epoxidase ERG1 catalyzes the stereospecific oxidation of squalene to (S)-2,3-epoxysqualene, which is considered to be a rate-limiting enzyme in steroid biosynthesis. Then, the lanosterol synthase ERG7 catalyzes the cyclization of (S)-2,3 oxidosqualene to lanosterol, a reaction that forms the sterol core. In the next steps, lanosterol is transformed to zymosterol through a complex process involving various demethylation, reduction and desaturation reactions. The lanosterol 14-alpha-demethylase ERG11 (also known as CYP51) catalyzes C14-demethylation of lanosterol to produce 4,4'-dimethyl cholesta-8,14,24-triene-3-beta-ol, which is critical for ergosterol biosynthesis. The C-14 reductase ERG24 reduces the C14=C15 double bond of 4,4-dimethyl-cholesta-8,14,24-trienol to produce 4,4-dimethyl-cholesta-8,24-dienol. 4,4-dimethyl-cholesta-8,24-dienol is substrate of the C-4 demethylation complex ERG25-ERG26-ERG27 in which ERG25 catalyzes the three-step monooxygenation required for the demethylation of 4,4-dimethyl and 4alpha-methylsterols, ERG26 catalyzes the oxidative decarboxylation that results in a reduction of the 3-beta-hydroxy group at the C-3 carbon to an oxo group, and ERG27 is responsible for the reduction of the keto group on the C-3. ERG28 has a role as a scaffold to help anchor ERG25, ERG26 and ERG27 to the endoplasmic reticulum and ERG29 regulates the activity of the iron-containing C4-methylsterol oxidase ERG25. Then, the sterol 24-C-methyltransferase ERG6 catalyzes the methyl transfer from S-adenosyl-methionine to the C-24 of zymosterol to form fecosterol. The C-8 sterol isomerase ERG2 catalyzes the reaction which results in unsaturation at C-7 in the B ring of sterols and thus converts fecosterol to episterol. The sterol-C5-desaturase ERG3 then catalyzes the introduction of a C-5 double bond in the B ring to produce 5-dehydroepisterol. The C-22 sterol desaturase ERG5 further converts 5-dehydroepisterol into ergosta-5,7,22,24(28)-tetraen-3beta-ol by forming the C-22(23) double bond in the sterol side chain. Finally, ergosta-5,7,22,24(28)-tetraen-3beta-ol is substrate of the C-24(28) sterol reductase ERG4 to produce ergosterol. In Candida albicans (strain SC5314 / ATCC MYA-2876) (Yeast), this protein is Delta(7)-sterol 5(6)-desaturase ERG3.